Consider the following 363-residue polypeptide: UDP-3-O-acylglucosamine N-acyltransferase (363 aa).

Histidine 239 serves as the catalytic Proton acceptor. Positions 342–363 are disordered; it reads LSEMKKEVEKEKESSREKEETK.

Belongs to the transferase hexapeptide repeat family. LpxD subfamily. Homotrimer.

The catalysed reaction is a UDP-3-O-[(3R)-3-hydroxyacyl]-alpha-D-glucosamine + a (3R)-hydroxyacyl-[ACP] = a UDP-2-N,3-O-bis[(3R)-3-hydroxyacyl]-alpha-D-glucosamine + holo-[ACP] + H(+). The protein operates within bacterial outer membrane biogenesis; LPS lipid A biosynthesis. Functionally, catalyzes the N-acylation of UDP-3-O-acylglucosamine using 3-hydroxyacyl-ACP as the acyl donor. Is involved in the biosynthesis of lipid A, a phosphorylated glycolipid that anchors the lipopolysaccharide to the outer membrane of the cell. In Syntrophus aciditrophicus (strain SB), this protein is UDP-3-O-acylglucosamine N-acyltransferase.